Reading from the N-terminus, the 420-residue chain is DNA repair protein RadA (420 aa).

Residue 62-69 (GDPGIGKS) participates in ATP binding. The RadA KNRFG motif motif lies at 218 to 222 (KNRFG). The tract at residues 317–420 (DAYLKSAGGV…IQEVLKKVFA (104 aa)) is lon-protease-like.

The protein belongs to the RecA family. RadA subfamily.

Its function is as follows. Plays a role in repairing double-strand DNA breaks, probably involving stabilizing or processing branched DNA or blocked replication forks. Required for efficient transformation with chromosomal (linear) DNA, but not for replicative plasmid DNA. Its increased sensitivity to a DNA damaging agent suggests it may be required for DNA repair. The polypeptide is DNA repair protein RadA (Streptococcus pneumoniae (strain ATCC BAA-255 / R6)).